Reading from the N-terminus, the 379-residue chain is Elongation factor Ts, mitochondrial (379 aa).

The transit peptide at 1-33 (MAWGQGAKRSILGLLFRSQHQTARAYSSSAFQT) directs the protein to the mitochondrion.

The protein belongs to the EF-Ts family.

The protein localises to the mitochondrion. In terms of biological role, associates with the EF-Tu.GDP complex and induces the exchange of GDP to GTP. It remains bound to the aminoacyl-tRNA.EF-Tu.GTP complex up to the GTP hydrolysis stage on the ribosome. This is Elongation factor Ts, mitochondrial from Zea mays (Maize).